Reading from the N-terminus, the 303-residue chain is Nucleotide-binding protein SAR0820 (303 aa).

18–25 (GLSGAGKS) contacts ATP. Residue 69–72 (DLRG) coordinates GTP.

Belongs to the RapZ-like family.

Its function is as follows. Displays ATPase and GTPase activities. The sequence is that of Nucleotide-binding protein SAR0820 from Staphylococcus aureus (strain MRSA252).